The chain runs to 397 residues: ATP-dependent RNA helicase eIF4A (397 aa).

The short motif at 23–51 (YTFDDLNLKPNIVRGIFGYGYESPSAIQQ) is the Q motif element. The region spanning 54–224 (ILPITEGRDV…TKFMNNPVRI (171 aa)) is the Helicase ATP-binding domain. 67–74 (AQSGTGKT) serves as a coordination point for ATP. Positions 172-175 (DEAD) match the DEAD box motif. The region spanning 235 to 396 (GIKQFYINVE…EMPADIGALF (162 aa)) is the Helicase C-terminal domain.

It belongs to the DEAD box helicase family. eIF4A subfamily. Component of the eIF4F complex, which composition varies with external and internal environmental conditions. It is composed of at least eIF4A, eIF4E and eIF4G.

It localises to the cytoplasm. The catalysed reaction is ATP + H2O = ADP + phosphate + H(+). Functionally, ATP-dependent RNA helicase which is a subunit of the eIF4F complex involved in cap recognition and is required for mRNA binding to ribosome. In the current model of translation initiation, eIF4A unwinds RNA secondary structures in the 5'-UTR of mRNAs which is necessary to allow efficient binding of the small ribosomal subunit, and subsequent scanning for the initiator codon. This Debaryomyces hansenii (strain ATCC 36239 / CBS 767 / BCRC 21394 / JCM 1990 / NBRC 0083 / IGC 2968) (Yeast) protein is ATP-dependent RNA helicase eIF4A (TIF1).